The following is a 1216-amino-acid chain: 1-phosphatidylinositol 4,5-bisphosphate phosphodiesterase beta-1 (1216 aa).

The S-palmitoyl cysteine moiety is linked to residue cysteine 17. Serine 236 is modified (phosphoserine). In terms of domain architecture, PI-PLC X-box spans glutamate 316–lysine 467. Residues histidine 331 and histidine 378 contribute to the active site. Residue serine 417 is modified to Phosphoserine. The interval lysine 469 to alanine 534 is disordered. The segment covering lysine 472–serine 483 has biased composition (basic and acidic residues). Residues serine 491 to serine 501 show a composition bias toward low complexity. The span at alanine 507–aspartate 518 shows a compositional bias: acidic residues. The residue at position 509 (threonine 509) is a Phosphothreonine. A phosphoserine mark is found at serine 511 and serine 582. The PI-PLC Y-box domain maps to methionine 540–arginine 656. One can recognise a C2 domain in the interval arginine 656 to leucine 784. Disordered regions lie at residues aspartate 834–proline 891, leucine 933–aspartate 993, lysine 1071–lysine 1095, and lysine 1172–leucine 1216. Serine 887 is modified (phosphoserine; by PKC). Basic and acidic residues-rich tracts occupy residues threonine 941 to lysine 951 and tyrosine 959 to glutamate 979. A phosphoserine mark is found at serine 978 and serine 987. The segment covering proline 980 to glutamate 991 has biased composition (polar residues). Residues lysine 1075 to lysine 1095 are compositionally biased toward basic and acidic residues. The segment covering threonine 1187 to proline 1198 has biased composition (polar residues). Phosphoserine occurs at positions 1199 and 1200. A compositionally biased stretch (basic and acidic residues) spans asparagine 1207 to leucine 1216.

As to quaternary structure, interacts with DGKQ. It depends on Ca(2+) as a cofactor. Post-translationally, palmitoylated. Palmitoylation at Cys-17 by ZDHHC21 regulates the signaling activity of PLCB1 and the function of the endothelial barrier. Palmitoylation by ZDHHC21 is stimulated by inflammation.

Its subcellular location is the nucleus membrane. It localises to the cytoplasm. The catalysed reaction is a 1,2-diacyl-sn-glycero-3-phospho-(1D-myo-inositol-4,5-bisphosphate) + H2O = 1D-myo-inositol 1,4,5-trisphosphate + a 1,2-diacyl-sn-glycerol + H(+). It catalyses the reaction a 1,2-diacyl-sn-glycero-3-phospho-(1D-myo-inositol) + H2O = 1D-myo-inositol 1-phosphate + a 1,2-diacyl-sn-glycerol + H(+). In terms of biological role, catalyzes the hydrolysis of 1-phosphatidylinositol 4,5-bisphosphate into diacylglycerol (DAG) and inositol 1,4,5-trisphosphate (IP3) and mediates intracellular signaling downstream of G protein-coupled receptors. Regulates the function of the endothelial barrier. This is 1-phosphatidylinositol 4,5-bisphosphate phosphodiesterase beta-1 (PLCB1) from Bos taurus (Bovine).